The chain runs to 149 residues: Large ribosomal subunit protein bL9 (149 aa).

This sequence belongs to the bacterial ribosomal protein bL9 family.

Its function is as follows. Binds to the 23S rRNA. In Persephonella marina (strain DSM 14350 / EX-H1), this protein is Large ribosomal subunit protein bL9.